The primary structure comprises 314 residues: 4-hydroxy-3-methylbut-2-enyl diphosphate reductase (314 aa).

Position 12 (C12) interacts with [4Fe-4S] cluster. Positions 41 and 74 each coordinate (2E)-4-hydroxy-3-methylbut-2-enyl diphosphate. Positions 41 and 74 each coordinate dimethylallyl diphosphate. H41 and H74 together coordinate isopentenyl diphosphate. C96 provides a ligand contact to [4Fe-4S] cluster. H124 contacts (2E)-4-hydroxy-3-methylbut-2-enyl diphosphate. Position 124 (H124) interacts with dimethylallyl diphosphate. Residue H124 coordinates isopentenyl diphosphate. The Proton donor role is filled by E126. T167 lines the (2E)-4-hydroxy-3-methylbut-2-enyl diphosphate pocket. C197 contacts [4Fe-4S] cluster. (2E)-4-hydroxy-3-methylbut-2-enyl diphosphate-binding residues include S225, S226, N227, and S269. Dimethylallyl diphosphate-binding residues include S225, S226, N227, and S269. Isopentenyl diphosphate contacts are provided by S225, S226, N227, and S269.

Belongs to the IspH family. Requires [4Fe-4S] cluster as cofactor.

It catalyses the reaction isopentenyl diphosphate + 2 oxidized [2Fe-2S]-[ferredoxin] + H2O = (2E)-4-hydroxy-3-methylbut-2-enyl diphosphate + 2 reduced [2Fe-2S]-[ferredoxin] + 2 H(+). It carries out the reaction dimethylallyl diphosphate + 2 oxidized [2Fe-2S]-[ferredoxin] + H2O = (2E)-4-hydroxy-3-methylbut-2-enyl diphosphate + 2 reduced [2Fe-2S]-[ferredoxin] + 2 H(+). It participates in isoprenoid biosynthesis; dimethylallyl diphosphate biosynthesis; dimethylallyl diphosphate from (2E)-4-hydroxy-3-methylbutenyl diphosphate: step 1/1. Its pathway is isoprenoid biosynthesis; isopentenyl diphosphate biosynthesis via DXP pathway; isopentenyl diphosphate from 1-deoxy-D-xylulose 5-phosphate: step 6/6. Functionally, catalyzes the conversion of 1-hydroxy-2-methyl-2-(E)-butenyl 4-diphosphate (HMBPP) into a mixture of isopentenyl diphosphate (IPP) and dimethylallyl diphosphate (DMAPP). Acts in the terminal step of the DOXP/MEP pathway for isoprenoid precursor biosynthesis. This is 4-hydroxy-3-methylbut-2-enyl diphosphate reductase from Actinobacillus pleuropneumoniae serotype 3 (strain JL03).